Consider the following 213-residue polypeptide: Pyridoxine/pyridoxamine 5'-phosphate oxidase (213 aa).

Residues 60-65 (RMVLMK), 75-76 (YS), K82, and Q104 each bind FMN. K65 provides a ligand contact to substrate. Substrate is bound by residues Y122 and R126. Residues 139 to 140 (QS) and W184 contribute to the FMN site. Residue 190 to 192 (RLH) coordinates substrate. R194 lines the FMN pocket.

The protein belongs to the pyridoxamine 5'-phosphate oxidase family. In terms of assembly, homodimer. The cofactor is FMN.

It catalyses the reaction pyridoxamine 5'-phosphate + O2 + H2O = pyridoxal 5'-phosphate + H2O2 + NH4(+). The enzyme catalyses pyridoxine 5'-phosphate + O2 = pyridoxal 5'-phosphate + H2O2. It functions in the pathway cofactor metabolism; pyridoxal 5'-phosphate salvage; pyridoxal 5'-phosphate from pyridoxamine 5'-phosphate: step 1/1. It participates in cofactor metabolism; pyridoxal 5'-phosphate salvage; pyridoxal 5'-phosphate from pyridoxine 5'-phosphate: step 1/1. Functionally, catalyzes the oxidation of either pyridoxine 5'-phosphate (PNP) or pyridoxamine 5'-phosphate (PMP) into pyridoxal 5'-phosphate (PLP). The polypeptide is Pyridoxine/pyridoxamine 5'-phosphate oxidase (Nitrobacter hamburgensis (strain DSM 10229 / NCIMB 13809 / X14)).